Consider the following 335-residue polypeptide: MLP-like protein 28 (335 aa).

This sequence belongs to the MLP family.

Functionally, can bind steroids (in vitro), and may also bind other types of hydrophobic ligands. The chain is MLP-like protein 28 (MLP28) from Arabidopsis thaliana (Mouse-ear cress).